The chain runs to 267 residues: Phosphatidylserine decarboxylase proenzyme (267 aa).

Residues Asp78, His132, and Ser236 each act as charge relay system; for autoendoproteolytic cleavage activity in the active site. The Schiff-base intermediate with substrate; via pyruvic acid; for decarboxylase activity role is filled by Ser236. At Ser236 the chain carries Pyruvic acid (Ser); by autocatalysis.

Belongs to the phosphatidylserine decarboxylase family. PSD-B subfamily. Prokaryotic type I sub-subfamily. As to quaternary structure, heterodimer of a large membrane-associated beta subunit and a small pyruvoyl-containing alpha subunit. Pyruvate serves as cofactor. In terms of processing, is synthesized initially as an inactive proenzyme. Formation of the active enzyme involves a self-maturation process in which the active site pyruvoyl group is generated from an internal serine residue via an autocatalytic post-translational modification. Two non-identical subunits are generated from the proenzyme in this reaction, and the pyruvate is formed at the N-terminus of the alpha chain, which is derived from the carboxyl end of the proenzyme. The autoendoproteolytic cleavage occurs by a canonical serine protease mechanism, in which the side chain hydroxyl group of the serine supplies its oxygen atom to form the C-terminus of the beta chain, while the remainder of the serine residue undergoes an oxidative deamination to produce ammonia and the pyruvoyl prosthetic group on the alpha chain. During this reaction, the Ser that is part of the protease active site of the proenzyme becomes the pyruvoyl prosthetic group, which constitutes an essential element of the active site of the mature decarboxylase.

Its subcellular location is the cell membrane. The catalysed reaction is a 1,2-diacyl-sn-glycero-3-phospho-L-serine + H(+) = a 1,2-diacyl-sn-glycero-3-phosphoethanolamine + CO2. The protein operates within phospholipid metabolism; phosphatidylethanolamine biosynthesis; phosphatidylethanolamine from CDP-diacylglycerol: step 2/2. Its function is as follows. Catalyzes the formation of phosphatidylethanolamine (PtdEtn) from phosphatidylserine (PtdSer). The chain is Phosphatidylserine decarboxylase proenzyme from Helicobacter pylori (strain Shi470).